The sequence spans 1193 residues: Magnesium-chelatase subunit H (1193 aa).

The protein belongs to the Mg-chelatase subunit H family.

The enzyme catalyses protoporphyrin IX + Mg(2+) + ATP + H2O = Mg-protoporphyrin IX + ADP + phosphate + 3 H(+). Its pathway is porphyrin-containing compound metabolism; bacteriochlorophyll biosynthesis (light-independent). In terms of biological role, involved in bacteriochlorophyll pigment biosynthesis; introduces a magnesium ion into protoporphyrin IX to yield Mg-protoroporphyrin IX. This Cereibacter sphaeroides (strain ATCC 17023 / DSM 158 / JCM 6121 / CCUG 31486 / LMG 2827 / NBRC 12203 / NCIMB 8253 / ATH 2.4.1.) (Rhodobacter sphaeroides) protein is Magnesium-chelatase subunit H (bchH).